We begin with the raw amino-acid sequence, 406 residues long: MNLALEILEKRGFLKQCTNLEALSTLMDKERVVFYVGVDATSTSLHIGHLIPFMVMAHLQRQGHIPIALVGGGTTKIGDPSGKDAMRKILSKEDIEKNVKAIRAQLLRIIDFSHGYILDNSAWLDNINYIEFLRDIGVCFSVNRMLGFETYKRRIKDGLSFIEFNYQLLQSYDFYMLNKIKNCKLQIGGDDQWGNIVSGVDLIKKKLGTEVFGLTLPLITRSDGKKMGKSEKGAVYLDAELYSVYDFYQYFRNVPDLDVKNFLYLFTFLGDDEIEHMSSVKGYLLNKAKETLAFEITKIVHGEDAALKASSAARAAFKGSEGDRADIPFFKLALDSLEGSILLIDLMVLSKVVSSKSEARRLINSGGVYIDKVRIGDQDYCLNKDNFINGEIELKIGKKRILRVIL.

L-tyrosine is bound at residue tyrosine 35. The 'HIGH' region signature appears at 40–49 (ATSTSLHIGH). The L-tyrosine site is built by tyrosine 166 and glutamine 170. Residues 226–230 (KMGKS) carry the 'KMSKS' region motif. Residue lysine 229 coordinates ATP. One can recognise an S4 RNA-binding domain in the interval 341–405 (ILLIDLMVLS…IGKKRILRVI (65 aa)).

The protein belongs to the class-I aminoacyl-tRNA synthetase family. TyrS type 1 subfamily. Homodimer.

The protein localises to the cytoplasm. The enzyme catalyses tRNA(Tyr) + L-tyrosine + ATP = L-tyrosyl-tRNA(Tyr) + AMP + diphosphate + H(+). In terms of biological role, catalyzes the attachment of tyrosine to tRNA(Tyr) in a two-step reaction: tyrosine is first activated by ATP to form Tyr-AMP and then transferred to the acceptor end of tRNA(Tyr). This is Tyrosine--tRNA ligase from Borrelia turicatae (strain 91E135).